We begin with the raw amino-acid sequence, 297 residues long: Vesicular-fusion protein SEC17 (297 aa).

Belongs to the SNAP family.

It is found in the membrane. In terms of biological role, required for vesicular transport between the endoplasmic reticulum and the Golgi apparatus. In Komagataella phaffii (strain GS115 / ATCC 20864) (Yeast), this protein is Vesicular-fusion protein SEC17 (SEC17).